Here is a 217-residue protein sequence, read N- to C-terminus: Putative oxidative stress regulator AosR (217 aa).

The short motif at 5–9 (CGRRC) is the CXXXC element. Cysteines 5 and 9 form a disulfide.

Belongs to the AosR family.

In Mycobacterium leprae (strain TN), this protein is Putative oxidative stress regulator AosR.